The primary structure comprises 464 residues: Keratin, type I cytoskeletal 28 (464 aa).

The segment at 1–85 (MSLRFSSGSR…GSEGGLFSGN (85 aa)) is head. The tract at residues 86–121 (EKVTMQNLNDRLASYLDNVRALEEANAELERKIKSW) is coil 1A. Residues 86–401 (EKVTMQNLND…RLIDGDRNSC (316 aa)) form the IF rod domain. Residues 122 to 143 (YEKHGPGSCHGLDHDYSRYHLT) are linker 1. The tract at residues 144-235 (IEDLKNKIIS…KNHEEEVKAL (92 aa)) is coil 1B. The segment at 236–258 (QCVAGGNVNVEMNAAPGVDLTLL) is linker 12. Residues 259-397 (LNNMRAEYED…ETYCRLIDGD (139 aa)) are coil 2. Positions 398–464 (RNSCSKSKGF…NGKTKQRVPF (67 aa)) are tail. Positions 402–417 (SKSKGFGSGSPGNSSK) are enriched in low complexity. 2 disordered regions span residues 402 to 422 (SKSK…LSRT) and 440 to 464 (SSRV…RVPF).

This sequence belongs to the intermediate filament family. In terms of assembly, heterotetramer of two type I and two type II keratins.

The protein localises to the cytoplasm. Its function is as follows. Essential for the proper assembly of types I and II keratin protein complexes and the formation of keratin intermediate filaments in the inner root sheath (irs). The protein is Keratin, type I cytoskeletal 28 of Bos taurus (Bovine).